We begin with the raw amino-acid sequence, 988 residues long: Transposase for transposon Tn501 (988 aa).

This sequence belongs to the transposase 7 family.

Its function is as follows. Required for transposition of transposon Tn501. This chain is Transposase for transposon Tn501 (tnpA), found in Pseudomonas aeruginosa.